The following is a 559-amino-acid chain: Actin-binding protein WASF1 (559 aa).

Disordered regions lie at residues 170-202, 304-383, and 412-490; these read EDKR…DRRR, IENR…GVLH, and VHPL…HPST. Residues 182-202 show a composition bias toward basic and acidic residues; that stretch reads KNLDRPHEPEKVPRAPHDRRR. Positions 304-313 are enriched in polar residues; the sequence is IENRPQSPAT. The span at 322 to 332 shows a compositional bias: pro residues; it reads PTPPPPPPPLP. Positions 333-346 are enriched in low complexity; the sequence is SALSTSSLRASMTS. Arg-341 carries the post-translational modification Asymmetric dimethylarginine; alternate. An Omega-N-methylarginine; alternate modification is found at Arg-341. Composition is skewed to pro residues over residues 347–360, 423–437, and 460–477; these read TPPP…PPPA, LPPP…PPGI, and STAP…PPSQ. A Phosphoserine modification is found at Ser-489. One can recognise a WH2 domain in the interval 497–514; sequence ARSVLLEAIRKGIQLRKV.

Belongs to the SCAR/WAVE family. Component of the WAVE1 complex composed of ABI2, CYFIP1 or CYFIP2, BRK1, NCKAP1 and WASF1/WAVE1. Within the complex, a heterodimer containing NCKAP1 and CYFIP1 interacts with a heterotrimer formed by WAVE1, ABI2 and BRK1. CYFIP2 binds to activated RAC1 which causes the complex to dissociate, releasing activated WASF1. The complex can also be activated by NCK1. Binds actin and the Arp2/3 complex. Interacts with BAIAP2. Interacts with SHANK3; the interaction mediates the association of SHANK3 with the WAVE1 complex. Interacts with ABI1 (via N-terminus). Interacts with SORBS2; this interaction greatly enhances phosphorylation by ABL1 and dephosphorylation by PTPN12 and might mediate partial to focal adhesion sites.

The protein localises to the cytoplasm. It is found in the cytoskeleton. The protein resides in the synapse. Its subcellular location is the cell junction. It localises to the focal adhesion. Functionally, downstream effector molecule involved in the transmission of signals from tyrosine kinase receptors and small GTPases to the actin cytoskeleton. Promotes formation of actin filaments. Part of the WAVE complex that regulates lamellipodia formation. The WAVE complex regulates actin filament reorganization via its interaction with the Arp2/3 complex. As component of the WAVE1 complex, required for BDNF-NTRK2 endocytic trafficking and signaling from early endosomes. Also involved in the regulation of mitochondrial dynamics. The polypeptide is Actin-binding protein WASF1 (WASF1) (Pongo abelii (Sumatran orangutan)).